The sequence spans 150 residues: Regulatory protein RecX (150 aa).

The protein belongs to the RecX family.

Its subcellular location is the cytoplasm. Functionally, modulates RecA activity. In Acidithiobacillus ferrooxidans (strain ATCC 23270 / DSM 14882 / CIP 104768 / NCIMB 8455) (Ferrobacillus ferrooxidans (strain ATCC 23270)), this protein is Regulatory protein RecX.